Here is a 95-residue protein sequence, read N- to C-terminus: Putative pterin-4-alpha-carbinolamine dehydratase (95 aa).

Belongs to the pterin-4-alpha-carbinolamine dehydratase family.

The enzyme catalyses (4aS,6R)-4a-hydroxy-L-erythro-5,6,7,8-tetrahydrobiopterin = (6R)-L-erythro-6,7-dihydrobiopterin + H2O. In Nocardia farcinica (strain IFM 10152), this protein is Putative pterin-4-alpha-carbinolamine dehydratase.